Here is a 180-residue protein sequence, read N- to C-terminus: D(1A) dopamine receptor (180 aa).

Residues Asn-1–Ile-10 form a helical membrane-spanning segment. Over Arg-11–Asn-21 the chain is Cytoplasmic. A helical transmembrane segment spans residues Phe-22–Ala-48. Residues Gly-49 to Cys-57 are Extracellular-facing. A disulfide bridge connects residues Cys-57 and Cys-147. A helical membrane pass occupies residues Asn-58–Val-80. Residues Asp-81–Lys-99 lie on the Cytoplasmic side of the membrane. A helical membrane pass occupies residues Ala-100–Trp-124. Residues His-125–Arg-153 lie on the Extracellular side of the membrane. Asn-136 carries N-linked (GlcNAc...) asparagine glycosylation. Residues Thr-154 to His-179 traverse the membrane as a helical segment. A topological domain (cytoplasmic) is located at residue Arg-180.

This sequence belongs to the G-protein coupled receptor 1 family. As to quaternary structure, interacts with DNAJC14 via its C-terminus. Interacts with DRD2. Interacts with DORIP1.

It localises to the cell membrane. Its subcellular location is the endoplasmic reticulum membrane. The protein localises to the cell projection. It is found in the cilium membrane. In terms of biological role, dopamine receptor whose activity is mediated by G proteins which activate adenylyl cyclase. The chain is D(1A) dopamine receptor (DRD1) from Oryctolagus cuniculus (Rabbit).